The following is a 355-amino-acid chain: UDP-N-acetylglucosamine--N-acetylmuramyl-(pentapeptide) pyrophosphoryl-undecaprenol N-acetylglucosamine transferase (355 aa).

UDP-N-acetyl-alpha-D-glucosamine-binding positions include 15–17, asparagine 127, arginine 163, serine 191, isoleucine 244, 263–268, and glutamine 288; these read TGG and ALTVSE.

This sequence belongs to the glycosyltransferase 28 family. MurG subfamily.

The protein resides in the cell inner membrane. The enzyme catalyses di-trans,octa-cis-undecaprenyl diphospho-N-acetyl-alpha-D-muramoyl-L-alanyl-D-glutamyl-meso-2,6-diaminopimeloyl-D-alanyl-D-alanine + UDP-N-acetyl-alpha-D-glucosamine = di-trans,octa-cis-undecaprenyl diphospho-[N-acetyl-alpha-D-glucosaminyl-(1-&gt;4)]-N-acetyl-alpha-D-muramoyl-L-alanyl-D-glutamyl-meso-2,6-diaminopimeloyl-D-alanyl-D-alanine + UDP + H(+). It functions in the pathway cell wall biogenesis; peptidoglycan biosynthesis. Functionally, cell wall formation. Catalyzes the transfer of a GlcNAc subunit on undecaprenyl-pyrophosphoryl-MurNAc-pentapeptide (lipid intermediate I) to form undecaprenyl-pyrophosphoryl-MurNAc-(pentapeptide)GlcNAc (lipid intermediate II). The protein is UDP-N-acetylglucosamine--N-acetylmuramyl-(pentapeptide) pyrophosphoryl-undecaprenol N-acetylglucosamine transferase of Escherichia coli O157:H7.